The following is an 807-amino-acid chain: Phenylalanine--tRNA ligase beta subunit (807 aa).

The region spanning 39–156 (AGEFSGVVIG…SDAPLGQCVR (118 aa)) is the tRNA-binding domain. One can recognise a B5 domain in the interval 409-488 (PQTKDVNLRR…RIFGYNNIPN (80 aa)). Positions 466, 472, 475, and 476 each coordinate Mg(2+). One can recognise an FDX-ACB domain in the interval 713–806 (SRFPANRRDL…LKTELNASLR (94 aa)).

This sequence belongs to the phenylalanyl-tRNA synthetase beta subunit family. Type 1 subfamily. Tetramer of two alpha and two beta subunits. Mg(2+) is required as a cofactor.

The protein localises to the cytoplasm. It carries out the reaction tRNA(Phe) + L-phenylalanine + ATP = L-phenylalanyl-tRNA(Phe) + AMP + diphosphate + H(+). This Colwellia psychrerythraea (strain 34H / ATCC BAA-681) (Vibrio psychroerythus) protein is Phenylalanine--tRNA ligase beta subunit.